The following is a 1193-amino-acid chain: Dynamin-like protein A (1193 aa).

The D1, associates with and fuses membranes, tethers lipsomes stretch occupies residues 1 to 609 (MTDQNRKELL…AFRERVKRLE (609 aa)). The interval 50–57 (GHYSAGKS) is G1 motif D1. The interval 76 to 78 (TSA) is G2 motif D1. Residues 141–144 (DTPG) are G3 motif D1. A G4 motif D1 region spans residues 199–202 (NQID). The D2, does not associate with membranes stretch occupies residues 561–1193 (MPKSEIKMEQ…WKNSDNTIKM (633 aa)). The tract at residues 619–626 (GGFSSGKS) is G1 motif D2. The G2 motif D2 stretch occupies residues 645-647 (TTA). The segment at 774–777 (DTPG) is G3 motif D2. The segment at 837 to 840 (NAAD) is G4 motif D2.

The protein belongs to the TRAFAC class dynamin-like GTPase superfamily. Dynamin/Fzo/YdjA family. Homodimer in solution. Both D1 and D2 domains interact with YwpG, YneK interacts only with D1 while RNase Y (rny) only interacts with whole protein. Probably oligomerizes at damaged membrane sites. It depends on Mg(2+) as a cofactor.

The protein resides in the cell membrane. It carries out the reaction GTP + H2O = GDP + phosphate + H(+). Mediates lipid mixing of vesicles and full mixing of their contents in the absence and presence of GTP. Tethers and mixes small vesicles better than larger ones, indicating a curvature preference. GTP slows down DynA-mediated lipid fusion, perhaps controlling its activity. Prefers phospholipid composition close to the B.subtilis membrane; requires phosphatidylglycerol for fusion has no activity on pure phosphatidylethanolamine vesicles. Regulates membrane lipid diffusion. Required to prevent membrane damage when exposed to low levels of membrane-damaging antibiotics or to bacteriophage. Probably surveys the cell membrane for stress; localizes to sites of membrane damage (treatment with nisin) and forms foci in cells treated with pore-forming compounds (CCCP). May assist membrane repair, possibly by membrane tethering and fusion. Probably functions both in early and late cell division, affects the proper formation of the FtsZ ring. Plays a non-redundant role with flottilin (floT) in membrane dynamics and cell shape. Probably able to bend membranes. Tethers liposomes and mediates their fusion; this does not require GTPase activity or the presence of GTP. Both GTPase domains (dynamin-type G) are required for GTPase activity. In terms of biological role, has intrinsic affinity for membranes and membrane distortion capability; causes tubulation and membrane distortion when expressed in a Drosophila cell line. The polypeptide is Dynamin-like protein A (Bacillus subtilis (strain 168)).